A 311-amino-acid chain; its full sequence is Probable cell division protein WhiA (311 aa).

A DNA-binding region (H-T-H motif) is located at residues 277-311 (TLKEVADQIPDGPISKSGVNHRFKKLHELAETLKE).

The protein belongs to the WhiA family.

Its function is as follows. Involved in cell division and chromosome segregation. The protein is Probable cell division protein WhiA of Lactobacillus helveticus (strain DPC 4571).